Here is a 310-residue protein sequence, read N- to C-terminus: Beta sliding clamp (310 aa).

Belongs to the beta sliding clamp family. In terms of assembly, forms a ring-shaped head-to-tail homodimer around DNA which binds and tethers DNA polymerases and other proteins to the DNA. The DNA replisome complex has a single clamp-loading complex (3 tau and 1 each of delta, delta', psi and chi subunits) which binds 3 Pol III cores (1 core on the leading strand and 2 on the lagging strand) each with a beta sliding clamp dimer. Additional proteins in the replisome are other copies of gamma, psi and chi, Ssb, DNA helicase and RNA primase.

The protein localises to the cytoplasm. Confers DNA tethering and processivity to DNA polymerases and other proteins. Acts as a clamp, forming a ring around DNA (a reaction catalyzed by the clamp-loading complex) which diffuses in an ATP-independent manner freely and bidirectionally along dsDNA. Initially characterized for its ability to contact the catalytic subunit of DNA polymerase III (Pol III), a complex, multichain enzyme responsible for most of the replicative synthesis in bacteria; Pol III exhibits 3'-5' exonuclease proofreading activity. The beta chain is required for initiation of replication as well as for processivity of DNA replication. This Micrococcus luteus (Micrococcus lysodeikticus) protein is Beta sliding clamp (dnaN).